A 168-amino-acid polypeptide reads, in one-letter code: Probable chorismate pyruvate-lyase (168 aa).

Residues R75, I114, and E155 each coordinate substrate.

This sequence belongs to the UbiC family.

Its subcellular location is the cytoplasm. The enzyme catalyses chorismate = 4-hydroxybenzoate + pyruvate. It functions in the pathway cofactor biosynthesis; ubiquinone biosynthesis. In terms of biological role, removes the pyruvyl group from chorismate, with concomitant aromatization of the ring, to provide 4-hydroxybenzoate (4HB) for the ubiquinone pathway. The protein is Probable chorismate pyruvate-lyase of Psychrobacter arcticus (strain DSM 17307 / VKM B-2377 / 273-4).